The sequence spans 166 residues: Phosphopantetheine adenylyltransferase (166 aa).

Ser-11 is a binding site for substrate. ATP is bound by residues 11–12 and His-19; that span reads SF. Substrate is bound by residues Lys-43, Val-80, and Arg-94. Residues 95 to 97, Glu-105, and 130 to 136 each bind ATP; these read GLR and VRTITAT.

Belongs to the bacterial CoaD family. In terms of assembly, homohexamer. Mg(2+) serves as cofactor.

It is found in the cytoplasm. It catalyses the reaction (R)-4'-phosphopantetheine + ATP + H(+) = 3'-dephospho-CoA + diphosphate. It participates in cofactor biosynthesis; coenzyme A biosynthesis; CoA from (R)-pantothenate: step 4/5. Functionally, reversibly transfers an adenylyl group from ATP to 4'-phosphopantetheine, yielding dephospho-CoA (dPCoA) and pyrophosphate. This chain is Phosphopantetheine adenylyltransferase, found in Mesorhizobium japonicum (strain LMG 29417 / CECT 9101 / MAFF 303099) (Mesorhizobium loti (strain MAFF 303099)).